A 634-amino-acid chain; its full sequence is Transcription termination factor FttA (634 aa).

Residues 4-69 (EEVLENIRKE…ISIRPDPSVL (66 aa)) are KHa. The segment at 70-137 (VEPEIAKQKI…WAPKPVRTPP (68 aa)) is KHb. Residues 179 to 381 (WIRVSFLGGA…LIIESTYGAY (203 aa)) form a metallo-beta-lactamase N-terminus region. H240, H242, D244, H245, H327, and D350 together coordinate Zn(2+). Positions 382-575 (DDVLPEREEA…LQVYTIEGFS (194 aa)) are beta-Casp. The metallo-beta-lactamase C-terminus stretch occupies residues 576-634 (GHSDRKQLIKYIRRLKPSPEKIIMVHGEESKCLDFADTVRRLFKKQTYVPMNLDAIRVK). H601 lines the Zn(2+) pocket.

The protein belongs to the metallo-beta-lactamase superfamily. RNA-metabolizing metallo-beta-lactamase-like family. FttA subfamily. As to quaternary structure, homodimer. Interacts with RNA polymerase (RNAP), interacts with the Spt4-Spt5 complex. The cofactor is Zn(2+).

Its activity is regulated as follows. Optimal NaCl concentration is 100 mM for nuclease activity on RNA. Functionally, terminates transcription on the whole genome. Termination is linked to FttA-mediated RNA cleavage and does not require NTP hydrolysis. Cleaves endonucleolytically at the RNA exit channel of RNA polymerase (RNAP); the 5'-3' exonuclease activity of this protein degrades the nascent RNA released from RNAP. Its function is as follows. An endoribonuclease with no apparent exonuclease activity, has low activity on single-stranded DNA (endodeoxyribonuclease, endoDNase). This is Transcription termination factor FttA from Methanocaldococcus jannaschii (strain ATCC 43067 / DSM 2661 / JAL-1 / JCM 10045 / NBRC 100440) (Methanococcus jannaschii).